An 819-amino-acid chain; its full sequence is DNA topoisomerase 4 subunit A (819 aa).

The region spanning 30–496 (LPDIRDGLKP…QIIEIDTASL (467 aa)) is the Topo IIA-type catalytic domain. Residue Y118 is the O-(5'-phospho-DNA)-tyrosine intermediate of the active site.

The protein belongs to the type II topoisomerase GyrA/ParC subunit family. ParC type 2 subfamily. Heterotetramer composed of ParC and ParE.

The protein localises to the cell membrane. The catalysed reaction is ATP-dependent breakage, passage and rejoining of double-stranded DNA.. In terms of biological role, topoisomerase IV is essential for chromosome segregation. It relaxes supercoiled DNA. Performs the decatenation events required during the replication of a circular DNA molecule. The polypeptide is DNA topoisomerase 4 subunit A (Streptococcus pyogenes serotype M3 (strain SSI-1)).